The following is a 352-amino-acid chain: Holliday junction branch migration complex subunit RuvB (352 aa).

The tract at residues 13-201 (FSFRKKELRL…FGISQKIEFY (189 aa)) is large ATPase domain (RuvB-L). ATP contacts are provided by residues Arg41, Gly82, Lys85, Thr86, Thr87, 148 to 150 (EDF), Arg191, Tyr201, and Arg238. Thr86 contacts Mg(2+). Residues 202–273 (TCDELKQIIV…LIKKALNSYQ (72 aa)) form a small ATPAse domain (RuvB-S) region. The head domain (RuvB-H) stretch occupies residues 276-352 (EKGLDSLDRH…KYIDSKDDNF (77 aa)). DNA is bound by residues Arg330 and Arg335.

It belongs to the RuvB family. Homohexamer. Forms an RuvA(8)-RuvB(12)-Holliday junction (HJ) complex. HJ DNA is sandwiched between 2 RuvA tetramers; dsDNA enters through RuvA and exits via RuvB. An RuvB hexamer assembles on each DNA strand where it exits the tetramer. Each RuvB hexamer is contacted by two RuvA subunits (via domain III) on 2 adjacent RuvB subunits; this complex drives branch migration. In the full resolvosome a probable DNA-RuvA(4)-RuvB(12)-RuvC(2) complex forms which resolves the HJ.

It localises to the cytoplasm. It carries out the reaction ATP + H2O = ADP + phosphate + H(+). Functionally, the RuvA-RuvB-RuvC complex processes Holliday junction (HJ) DNA during genetic recombination and DNA repair, while the RuvA-RuvB complex plays an important role in the rescue of blocked DNA replication forks via replication fork reversal (RFR). RuvA specifically binds to HJ cruciform DNA, conferring on it an open structure. The RuvB hexamer acts as an ATP-dependent pump, pulling dsDNA into and through the RuvAB complex. RuvB forms 2 homohexamers on either side of HJ DNA bound by 1 or 2 RuvA tetramers; 4 subunits per hexamer contact DNA at a time. Coordinated motions by a converter formed by DNA-disengaged RuvB subunits stimulates ATP hydrolysis and nucleotide exchange. Immobilization of the converter enables RuvB to convert the ATP-contained energy into a lever motion, pulling 2 nucleotides of DNA out of the RuvA tetramer per ATP hydrolyzed, thus driving DNA branch migration. The RuvB motors rotate together with the DNA substrate, which together with the progressing nucleotide cycle form the mechanistic basis for DNA recombination by continuous HJ branch migration. Branch migration allows RuvC to scan DNA until it finds its consensus sequence, where it cleaves and resolves cruciform DNA. The protein is Holliday junction branch migration complex subunit RuvB of Prochlorococcus marinus (strain AS9601).